The sequence spans 310 residues: MERWAAPKVTAGSARRYVADQPSFSSTLLDAIYKSMDEQPGHGGGATGVEAVAAAAKKQHEAALHYGYYYKPSLAGSYRARAPGPHATTSSSSECSSYGGFSSSEAESSHHRRLRPIRTTVPGGAPGPAPEKKAKKPGASIRAKLRDLRKPASPGARLAGFLNSIFAGKRAPATPPSATAGAESACSTASSYSRSCLSKTPSTRGQAKRTVRFLDSDTESLASSTVVDRRRVPVEAVQQMLLQRMEMESDEDDDESSDASSDLFELENFAAIAPAGAAYRDELPVYETTRVALNRAIGHGYGHGRSARVV.

A disordered region spans residues 81-141; it reads RAPGPHATTS…KKAKKPGASI (61 aa). The segment covering 90–106 has biased composition (low complexity); it reads SSSSECSSYGGFSSSEA.

The protein belongs to the BIG GRAIN 1 (BG1) plant protein family.

Its subcellular location is the cell membrane. Involved in auxin transport. Positive regulator of the auxin signaling pathway involved in gravitropism, plant growth and grain development. In Oryza sativa subsp. indica (Rice), this protein is Protein BIG GRAIN 1.